We begin with the raw amino-acid sequence, 156 residues long: SsrA-binding protein (156 aa).

It belongs to the SmpB family.

Its subcellular location is the cytoplasm. Required for rescue of stalled ribosomes mediated by trans-translation. Binds to transfer-messenger RNA (tmRNA), required for stable association of tmRNA with ribosomes. tmRNA and SmpB together mimic tRNA shape, replacing the anticodon stem-loop with SmpB. tmRNA is encoded by the ssrA gene; the 2 termini fold to resemble tRNA(Ala) and it encodes a 'tag peptide', a short internal open reading frame. During trans-translation Ala-aminoacylated tmRNA acts like a tRNA, entering the A-site of stalled ribosomes, displacing the stalled mRNA. The ribosome then switches to translate the ORF on the tmRNA; the nascent peptide is terminated with the 'tag peptide' encoded by the tmRNA and targeted for degradation. The ribosome is freed to recommence translation, which seems to be the essential function of trans-translation. This Clostridium perfringens (strain 13 / Type A) protein is SsrA-binding protein.